Here is a 412-residue protein sequence, read N- to C-terminus: Thyroxine-binding globulin (412 aa).

Residues M1–C16 form the signal peptide. N35, N98, N164, and N252 each carry an N-linked (GlcNAc...) asparagine glycan. 2 residues coordinate thyroxine: N292 and K395.

It belongs to the serpin family. Expressed by the liver and secreted in plasma.

The protein resides in the secreted. In terms of biological role, major thyroid hormone transport protein in serum. In Ovis aries (Sheep), this protein is Thyroxine-binding globulin (SERPINA7).